Reading from the N-terminus, the 85-residue chain is High affinity immunoglobulin epsilon receptor subunit gamma (85 aa).

An N-terminal signal peptide occupies residues 1–18 (MIPAVVLLLLLLVEQAAA). The Extracellular segment spans residues 19–23 (LGEPQ). The helical transmembrane segment at 24 to 44 (LCYILDAILFLYGIVLTLLYC) threads the bilayer. The Cytoplasmic portion of the chain corresponds to 45–85 (RLKLQVRKAATASEKSDGIYTGLSTRTQETYETLKHEKPPQ). Positions 53–81 (AATASEKSDGIYTGLSTRTQETYETLKHE) constitute an ITAM domain. Phosphotyrosine is present on Tyr-64. A Phosphoserine modification is found at Ser-68. Tyr-75 bears the Phosphotyrosine mark. At Thr-77 the chain carries Phosphothreonine.

It belongs to the CD3Z/FCER1G family. IgE Fc receptor is a tetramer of an alpha chain, a beta chain, and two disulfide linked gamma chains. Associates with FCGR1A; forms a functional signaling complex. The signaling subunit of immunoglobulin gamma (IgG) Fc receptor complex. As a homodimer or a heterodimer of CD247 and FCER1G, associates with the ligand binding subunit FCGR3A to form a functional receptor complex. Associates with CLEC6A. Interacts with CLEC4E. Interacts (via ITAM domain) with SYK (via SH2 domains); activates SYK, enabling integrin-mediated activation of neutrophils and macrophages. Interacts with CSF2RB and recruits SYK in response to IL3 stimulation; this interaction is direct. Interacts with CD300LH; the interaction may be indirect. Interacts with CD300LD. Interacts with TARM1.

It localises to the cell membrane. Adapter protein containing an immunoreceptor tyrosine-based activation motif (ITAM) that transduces activation signals from various immunoreceptors. As a component of the high-affinity immunoglobulin E (IgE) receptor, mediates allergic inflammatory signaling in mast cells. As a constitutive component of interleukin-3 receptor complex, selectively mediates interleukin 4/IL4 production by basophils priming T-cells toward effector T-helper 2 subset. Associates with pattern recognition receptors CLEC4D and CLEC4E to form a functional signaling complex in myeloid cells. Binding of mycobacterial trehalose 6,6'-dimycolate (TDM) to this receptor complex leads to phosphorylation of ITAM, triggering activation of SYK, CARD9 and NF-kappa-B, consequently driving maturation of antigen-presenting cells and shaping antigen-specific priming of T-cells toward effector T-helper 1 and T-helper 17 cell subtypes. May function cooperatively with other activating receptors. Functionally linked to integrin beta-2/ITGB2-mediated neutrophil activation. Also involved in integrin alpha-2/ITGA2-mediated platelet activation. The protein is High affinity immunoglobulin epsilon receptor subunit gamma (FCER1G) of Bos taurus (Bovine).